We begin with the raw amino-acid sequence, 197 residues long: Dephospho-CoA kinase (197 aa).

The 193-residue stretch at 5–197 (RLGLTGSIGM…IAHIRETADA (193 aa)) folds into the DPCK domain. Residue 13–18 (GMGKST) participates in ATP binding.

This sequence belongs to the CoaE family.

The protein resides in the cytoplasm. It carries out the reaction 3'-dephospho-CoA + ATP = ADP + CoA + H(+). It functions in the pathway cofactor biosynthesis; coenzyme A biosynthesis; CoA from (R)-pantothenate: step 5/5. Functionally, catalyzes the phosphorylation of the 3'-hydroxyl group of dephosphocoenzyme A to form coenzyme A. This chain is Dephospho-CoA kinase, found in Cereibacter sphaeroides (strain ATCC 17023 / DSM 158 / JCM 6121 / CCUG 31486 / LMG 2827 / NBRC 12203 / NCIMB 8253 / ATH 2.4.1.) (Rhodobacter sphaeroides).